A 560-amino-acid chain; its full sequence is 2-succinyl-5-enolpyruvyl-6-hydroxy-3-cyclohexene-1-carboxylate synthase (560 aa).

This sequence belongs to the TPP enzyme family. MenD subfamily. As to quaternary structure, homodimer. Mg(2+) is required as a cofactor. Requires Mn(2+) as cofactor. The cofactor is thiamine diphosphate.

It catalyses the reaction isochorismate + 2-oxoglutarate + H(+) = 5-enolpyruvoyl-6-hydroxy-2-succinyl-cyclohex-3-ene-1-carboxylate + CO2. It participates in quinol/quinone metabolism; 1,4-dihydroxy-2-naphthoate biosynthesis; 1,4-dihydroxy-2-naphthoate from chorismate: step 2/7. It functions in the pathway quinol/quinone metabolism; menaquinone biosynthesis. In terms of biological role, catalyzes the thiamine diphosphate-dependent decarboxylation of 2-oxoglutarate and the subsequent addition of the resulting succinic semialdehyde-thiamine pyrophosphate anion to isochorismate to yield 2-succinyl-5-enolpyruvyl-6-hydroxy-3-cyclohexene-1-carboxylate (SEPHCHC). The protein is 2-succinyl-5-enolpyruvyl-6-hydroxy-3-cyclohexene-1-carboxylate synthase of Staphylococcus saprophyticus subsp. saprophyticus (strain ATCC 15305 / DSM 20229 / NCIMB 8711 / NCTC 7292 / S-41).